Reading from the N-terminus, the 183-residue chain is UPF0397 protein PBPRA2239 (183 aa).

A run of 5 helical transmembrane segments spans residues 8–28, 41–61, 69–89, 110–130, and 147–167; these read VVLIAIGAALYGIGGLPMFGI, AVLALFSVLFGPLVGFLVGFI, FAGWGVWLTWVLGSGLVGLII, FALFVFLAFLGNVIGYGCSAY, and LIIIAAGNTLLIAIVGHYILT.

It belongs to the UPF0397 family.

The protein resides in the cell membrane. This chain is UPF0397 protein PBPRA2239, found in Photobacterium profundum (strain SS9).